The sequence spans 619 residues: Very-long-chain aldehyde decarbonylase GL1-1 (619 aa).

5 consecutive transmembrane segments (helical) span residues 44–64, 93–113, 123–143, 190–210, and 322–342; these read LLLL…WSSF, DNFL…FPSL, GLAV…YAAH, AAAC…VLGF, and PFLL…WAWS. One can recognise a Fatty acid hydroxylase domain in the interval 129–269; sequence LLHVAATEPL…MPLFDLIGGT (141 aa).

It belongs to the sterol desaturase family. In terms of assembly, homodimer.

The protein resides in the endoplasmic reticulum membrane. It carries out the reaction a long-chain fatty aldehyde + 2 NADPH + O2 + H(+) = a long-chain alkane + formate + 2 NADP(+) + H2O. Functionally, aldehyde decarbonylase involved in the conversion of aldehydes to alkanes. Core component of a very-long-chain alkane synthesis complex. This Oryza sativa subsp. indica (Rice) protein is Very-long-chain aldehyde decarbonylase GL1-1.